A 136-amino-acid chain; its full sequence is Small ribosomal subunit protein eS6 (136 aa).

It belongs to the eukaryotic ribosomal protein eS6 family.

In Methanosarcina mazei (strain ATCC BAA-159 / DSM 3647 / Goe1 / Go1 / JCM 11833 / OCM 88) (Methanosarcina frisia), this protein is Small ribosomal subunit protein eS6.